Here is an 817-residue protein sequence, read N- to C-terminus: DNA replication licensing factor Mcm6 (817 aa).

A C4-type zinc finger spans residues 152-179 (CLDCQTEIRNVEQQFKFTNPTICRNPVC). The region spanning 338–544 (LYQNLISSLF…VVDYAIARKI (207 aa)) is the MCM domain. ATP is bound by residues Ser391, Thr392, Ala393, Lys394, Ser395, and Asn496. The Arginine finger signature appears at 520–523 (SRFD). The ADP site is built by Arg611 and Glu614.

This sequence belongs to the MCM family. In terms of assembly, component of the Mcm2-7 complex. The complex forms a toroidal hexameric ring with the proposed subunit order Mcm2-Mcm6-Mcm4-Mcm7-Mcm3-Mcm5. The heterodimers of Mcm4/Mcm6 and Mcm3/Mcm5 interact with Mcm2 and Mcm7. In stage 12 embryos, strongly expressed in the CNS and weakly in the gut.

The protein localises to the nucleus. The catalysed reaction is ATP + H2O = ADP + phosphate + H(+). Acts as a component of the Mcm2-7 complex (Mcm complex) which is the putative replicative helicase essential for 'once per cell cycle' DNA replication initiation and elongation in eukaryotic cells. Core component of CDC45-MCM-GINS (CMG) helicase, the molecular machine that unwinds template DNA during replication, and around which the replisome is built. The active ATPase sites in the Mcm2-7 ring are formed through the interaction surfaces of two neighboring subunits such that a critical structure of a conserved arginine finger motif is provided in trans relative to the ATP-binding site of the Walker A box of the adjacent subunit. The six ATPase active sites, however, are likely to contribute differentially to the complex helicase activity Required for DNA replication and cell proliferation. Required for mitotic cycles, endocycles, and the special S phase associated with the amplification of chorion genes; has a role in origin unwinding or fork elongation at chorion loci. In Drosophila melanogaster (Fruit fly), this protein is DNA replication licensing factor Mcm6.